The chain runs to 39 residues: Cytochrome b559 subunit beta (39 aa).

The chain crosses the membrane as a helical span at residues 14–30 (WLTVHGLAVPTVSFLGS). Histidine 18 is a binding site for heme.

The protein belongs to the PsbE/PsbF family. Heterodimer of an alpha subunit and a beta subunit. PSII is composed of 1 copy each of membrane proteins PsbA, PsbB, PsbC, PsbD, PsbE, PsbF, PsbH, PsbI, PsbJ, PsbK, PsbL, PsbM, PsbT, PsbX, PsbY, PsbZ, Psb30/Ycf12, at least 3 peripheral proteins of the oxygen-evolving complex and a large number of cofactors. It forms dimeric complexes. Heme b serves as cofactor.

It localises to the plastid. Its subcellular location is the chloroplast thylakoid membrane. In terms of biological role, this b-type cytochrome is tightly associated with the reaction center of photosystem II (PSII). PSII is a light-driven water:plastoquinone oxidoreductase that uses light energy to abstract electrons from H(2)O, generating O(2) and a proton gradient subsequently used for ATP formation. It consists of a core antenna complex that captures photons, and an electron transfer chain that converts photonic excitation into a charge separation. The polypeptide is Cytochrome b559 subunit beta (Cucumis sativus (Cucumber)).